The following is a 395-amino-acid chain: Chaperone protein DnaJ (395 aa).

Residues 4-69 (DYYEVLGVGR…DKRRRYDQFG (66 aa)) form the J domain. The CR-type zinc finger occupies 152 to 233 (GVEKTLKIKK…CHGEGIKQGE (82 aa)). Zn(2+)-binding residues include Cys-165, Cys-168, Cys-181, Cys-184, Cys-207, Cys-210, Cys-221, and Cys-224. CXXCXGXG motif repeat units follow at residues 165-172 (CDVCNGTG), 181-188 (CPTCQGTG), 207-214 (CPTCGGEG), and 221-228 (CTACHGEG).

It belongs to the DnaJ family. Homodimer. Zn(2+) serves as cofactor.

The protein resides in the cytoplasm. Participates actively in the response to hyperosmotic and heat shock by preventing the aggregation of stress-denatured proteins and by disaggregating proteins, also in an autonomous, DnaK-independent fashion. Unfolded proteins bind initially to DnaJ; upon interaction with the DnaJ-bound protein, DnaK hydrolyzes its bound ATP, resulting in the formation of a stable complex. GrpE releases ADP from DnaK; ATP binding to DnaK triggers the release of the substrate protein, thus completing the reaction cycle. Several rounds of ATP-dependent interactions between DnaJ, DnaK and GrpE are required for fully efficient folding. Also involved, together with DnaK and GrpE, in the DNA replication of plasmids through activation of initiation proteins. This Prosthecochloris aestuarii (strain DSM 271 / SK 413) protein is Chaperone protein DnaJ.